Reading from the N-terminus, the 549-residue chain is Neurofilament light polypeptide (549 aa).

S2 carries the N-acetylserine modification. The segment at 2–92 is head; that stretch reads SSFYSEPYYS…KSIRTQEKAQ (91 aa). An O-linked (GlcNAc) threonine glycan is attached at T21. R23 bears the Asymmetric dimethylarginine; alternate mark. The residue at position 23 (R23) is an Omega-N-methylarginine; alternate. A glycan (O-linked (GlcNAc) serine) is linked at S27. R30 is modified (omega-N-methylarginine). A Phosphotyrosine modification is found at Y43. S56, S66, and S102 each carry phosphoserine. The 312-residue stretch at 89-400 folds into the IF rod domain; the sequence is EKAQLQDLND…KLLEGEETRL (312 aa). A coil 1A region spans residues 93–124; the sequence is LQDLNDRFASFIERVHELEQQNKVLEAQLLVL. Residues 125-137 form a linker 1 region; sequence RQKHSEPSRFRAL. The coil 1B stretch occupies residues 138–233; sequence YEQEIRDLRL…KVHEEEIAEL (96 aa). Residues 234–252 are linker 12; it reads QAQIQYAQISVEMDVSSKP. The interval 253 to 271 is coil 2A; that stretch reads DLSAALKDIRAQYEKLAAK. The tract at residues 272–280 is linker 2; it reads NMQNAEEWF. The segment at 281-396 is coil 2B; the sequence is KSRFTVLTES…AAYRKLLEGE (116 aa). Positions 381-391 are epitope; recognized by IF-specific monoclonal antibody; it reads ALDIEIAAYRK. Residues 397 to 443 form a tail, subdomain A region; it reads ETRLSFTSVGSLTTGYSQSSQVFGRSAYGGLQTSSYLMSTRSFPSYY. The tract at residues 397-549 is tail; that stretch reads ETRLSFTSVG…GEEQATKKKD (153 aa). The tract at residues 444–549 is tail, subdomain B (acidic); sequence TSHVQEEQIE…GEEQATKKKD (106 aa). Positions 462–549 are disordered; it reads KAEEAKDEPP…GEEQATKKKD (88 aa). Residues 471–534 show a composition bias toward acidic residues; it reads PSEGEAEEEG…ETKEAEEEEK (64 aa). The residue at position 472 (S472) is a Phosphoserine. The residue at position 526 (T526) is a Phosphothreonine. Basic and acidic residues predominate over residues 535–549; it reads KDEGAGEEQATKKKD.

Belongs to the intermediate filament family. In terms of assembly, forms homodimers (in vitro). Forms heterodimers with NEFH or NEFM; which can further hetero-oligomerize (in vitro). Forms heterodimers with INA (in vitro). Interacts with ARHGEF28. Interacts with TRIM2. Post-translationally, O-glycosylated. Phosphorylated in the head and rod regions by the PKC kinase PKN1, leading to the inhibition of polymerization. In terms of processing, ubiquitinated in the presence of TRIM2 and UBE2D1.

The protein localises to the cell projection. It localises to the axon. The protein resides in the cytoplasm. Its subcellular location is the cytoskeleton. Neurofilaments usually contain three intermediate filament proteins: NEFL, NEFM, and NEFH which are involved in the maintenance of neuronal caliber. May additionally cooperate with the neuronal intermediate filament proteins PRPH and INA to form neuronal filamentous networks. The polypeptide is Neurofilament light polypeptide (NEFL) (Sus scrofa (Pig)).